The primary structure comprises 156 residues: Small ribosomal subunit protein uS7 (156 aa).

Belongs to the universal ribosomal protein uS7 family. In terms of assembly, part of the 30S ribosomal subunit. Contacts proteins S9 and S11.

Its function is as follows. One of the primary rRNA binding proteins, it binds directly to 16S rRNA where it nucleates assembly of the head domain of the 30S subunit. Is located at the subunit interface close to the decoding center, probably blocks exit of the E-site tRNA. This is Small ribosomal subunit protein uS7 from Brevibacillus brevis (strain 47 / JCM 6285 / NBRC 100599).